The sequence spans 338 residues: DNA-directed RNA polymerase subunit alpha (338 aa).

Residues 1–226 are alpha N-terminal domain (alpha-NTD); that stretch reads MLIAQRPTLT…ELFGLTRELN (226 aa). The tract at residues 243–338 is alpha C-terminal domain (alpha-CTD); the sequence is YAESLGTPVE…DDDYAETEQY (96 aa). A disordered region spans residues 319-338; that stretch reads AAAEAYDEANDDDYAETEQY. Positions 323–338 are enriched in acidic residues; sequence AYDEANDDDYAETEQY.

Belongs to the RNA polymerase alpha chain family. In terms of assembly, homodimer. The RNAP catalytic core consists of 2 alpha, 1 beta, 1 beta' and 1 omega subunit. When a sigma factor is associated with the core the holoenzyme is formed, which can initiate transcription.

The enzyme catalyses RNA(n) + a ribonucleoside 5'-triphosphate = RNA(n+1) + diphosphate. In terms of biological role, DNA-dependent RNA polymerase catalyzes the transcription of DNA into RNA using the four ribonucleoside triphosphates as substrates. The polypeptide is DNA-directed RNA polymerase subunit alpha (Cutibacterium acnes (strain DSM 16379 / KPA171202) (Propionibacterium acnes)).